Here is a 193-residue protein sequence, read N- to C-terminus: MSMHIIAGLGNPGSHYQWTRHNAGFLFLDRLAHLENVSITRKSFSGLAGEWSRANCRHILLKPQTFMNLSGRSVMQALQFYKLPLSQAIVVHDDLDLPFGTVRLKQGGGHGGHNGLRSIMEQLGKGDFIRLRVGIGRPLHGDTVNYVLGSMPPEQMELLPRILDGGLEMLEMLLDQGLPKAMSLFNNRNFLEK.

Y16 contributes to the tRNA binding site. The active-site Proton acceptor is the H21. 3 residues coordinate tRNA: F66, N68, and N114.

The protein belongs to the PTH family. Monomer.

It localises to the cytoplasm. It catalyses the reaction an N-acyl-L-alpha-aminoacyl-tRNA + H2O = an N-acyl-L-amino acid + a tRNA + H(+). Its function is as follows. Hydrolyzes ribosome-free peptidyl-tRNAs (with 1 or more amino acids incorporated), which drop off the ribosome during protein synthesis, or as a result of ribosome stalling. Catalyzes the release of premature peptidyl moieties from peptidyl-tRNA molecules trapped in stalled 50S ribosomal subunits, and thus maintains levels of free tRNAs and 50S ribosomes. This Pelobacter propionicus (strain DSM 2379 / NBRC 103807 / OttBd1) protein is Peptidyl-tRNA hydrolase.